A 65-amino-acid chain; its full sequence is Crotamine (65 aa).

The signal sequence occupies residues Met1–Ala22. Short sequence motifs (nuclear localization signal) lie at residues Lys24 to Cys40 and Lys49 to Lys61. Intrachain disulfides connect Cys26–Cys58, Cys33–Cys52, and Cys40–Cys59.

It belongs to the crotamine-myotoxin family. In terms of assembly, monomer. In terms of tissue distribution, expressed by the venom gland.

Its subcellular location is the secreted. In terms of biological role, cationic peptide that possesses multiple functions. It acts as a cell-penetrating peptide (CPP), and as a potent voltage-gated potassium channel inhibitor. It exhibits antimicrobial activities, hind limb paralysis, and severe muscle necrosis by a non-enzymatic mechanism. As a cell-penetrating peptide, crotamine has high specificity for actively proliferating cells, and interacts inside the cell with subcellular and subnuclear structures, like vesicular compartments, chromosomes and centrioles. It penetrates into the cells as fast as five minutes after its addition to cell culture medium. In vivo, after intraperitoneal administration, it is found in cells of peritoneal fluid and bone marrow, demonstrating preferential nuclear and perinuclear localization. To enter the cell, it interacts with the chains of heparan sulfate membrane proteoglycan (HSPG), and is endocytosed (in complex with HSPG) in vesicles which are transported into the cell with the help of clathrin. Inside the cell, crotamine accumulates in lysosomal vesicles. As soon as the peptide accumulates in endosomes/lysosomes vesicles, these compartments are disrupted and their contents released into the cytosol. This loss of lysosomal content induces cell death at high concentrations, or promotes the distribution of crotamine in cytoplasmic compartments, which is a step before crotamine nuclear uptake. As a potassium channel inhibitor, this toxin selectively inhibits Kv1.1/KCNA1, Kv1.2/KCNA2 and Kv1.3/KCNA3 channels with an IC(50) of 369, 386 and 287 nM, respectively. The inhibition of Kv1.3/KCNA channels induced by this toxin occurs rapidly and is voltage-independent. The channel inhibition is reversible after washing, suggesting a pure and classical channel blockage effect, without effects in potassium channel kinetics. As an antimicrobial peptide, crotamine shows antibacterial activity against E.coli and B.subtilis, and antifungal activity against Candida spp., Trichosporon spp. and C.neoformans. It kills bacteria through membrane permeabilization. The protein is Crotamine (CRO2) of Crotalus durissus terrificus (South American rattlesnake).